Here is a 240-residue protein sequence, read N- to C-terminus: Ubiquitin domain-containing protein 1 (240 aa).

Residues 1 to 48 (MGGCVGRPQGESQRSQSRASGQQRKRAGRNEPLKKERPRWKSDYPMTD) form a disordered region. Positions 12 to 22 (SQRSQSRASGQ) are enriched in low complexity. Over residues 28–42 (GRNEPLKKERPRWKS) the composition is skewed to basic and acidic residues. The Ubiquitin-like domain occupies 153–228 (FQLKVRLSTG…DTSYCKPATR (76 aa)).

Functionally, may be involved in the regulation of cellular senescence through a positive feedback loop with TP53. This is Ubiquitin domain-containing protein 1 (ubtd1) from Xenopus tropicalis (Western clawed frog).